A 152-amino-acid chain; its full sequence is MTITDLVLILFIAALLAYALYDQFIMPRRNGPTLLSIALLRRGRIDSVIFVGLVAILIYNNVTSHGAQMTTWLLSALALMGFYIFWIRTPRIIFKQRGFFFANVWIEYNRIKEMNLSEDGVLVMQLEQRRLLIRVRNIDDLEKIYKLLIENQ.

At 1 to 5 the chain is on the periplasmic side; sequence MTITD. The helical transmembrane segment at 6-26 threads the bilayer; that stretch reads LVLILFIAALLAYALYDQFIM. At 27 to 44 the chain is on the cytoplasmic side; that stretch reads PRRNGPTLLSIALLRRGR. The helical transmembrane segment at 45-65 threads the bilayer; the sequence is IDSVIFVGLVAILIYNNVTSH. Residue G66 is a topological domain, periplasmic. A helical transmembrane segment spans residues 67–87; it reads AQMTTWLLSALALMGFYIFWI. At 88 to 152 the chain is on the cytoplasmic side; that stretch reads RTPRIIFKQR…KIYKLLIENQ (65 aa).

The protein belongs to the UPF0266 family.

The protein resides in the cell inner membrane. The protein is UPF0266 membrane protein YobD (yobD) of Salmonella typhi.